A 29-amino-acid chain; its full sequence is Protamine-like protein (29 aa).

A disordered region spans residues 1-29 (MRSFDQGSTRAPARERCRRQRPEGRSAQR). The span at 12–29 (PARERCRRQRPEGRSAQR) shows a compositional bias: basic and acidic residues.

This is Protamine-like protein (tpr) from Escherichia coli (strain K12).